The chain runs to 206 residues: 2,3-bisphosphoglycerate-dependent phosphoglycerate mutase (206 aa).

Substrate is bound by residues 9–16 (RHGQSEWN), 22–23 (TG), arginine 61, 88–91 (ERNY), lysine 99, 115–116 (RR), and 159–160 (GN). Histidine 10 (tele-phosphohistidine intermediate) is an active-site residue. Glutamate 88 serves as the catalytic Proton donor/acceptor.

This sequence belongs to the phosphoglycerate mutase family. BPG-dependent PGAM subfamily. As to quaternary structure, homodimer.

It catalyses the reaction (2R)-2-phosphoglycerate = (2R)-3-phosphoglycerate. The protein operates within carbohydrate degradation; glycolysis; pyruvate from D-glyceraldehyde 3-phosphate: step 3/5. Its function is as follows. Catalyzes the interconversion of 2-phosphoglycerate and 3-phosphoglycerate. The sequence is that of 2,3-bisphosphoglycerate-dependent phosphoglycerate mutase from Bartonella tribocorum (strain CIP 105476 / IBS 506).